A 295-amino-acid chain; its full sequence is Protoheme IX farnesyltransferase (295 aa).

Transmembrane regions (helical) follow at residues Ile-27–His-47, Pro-48–Ile-68, Ile-93–Ile-115, Tyr-119–Tyr-136, Asn-147–Thr-167, Leu-175–Leu-195, Ile-219–Leu-239, Thr-247–Ile-267, and Met-275–Phe-295.

The protein belongs to the UbiA prenyltransferase family. Protoheme IX farnesyltransferase subfamily.

Its subcellular location is the cell inner membrane. The enzyme catalyses heme b + (2E,6E)-farnesyl diphosphate + H2O = Fe(II)-heme o + diphosphate. It functions in the pathway porphyrin-containing compound metabolism; heme O biosynthesis; heme O from protoheme: step 1/1. In terms of biological role, converts heme B (protoheme IX) to heme O by substitution of the vinyl group on carbon 2 of heme B porphyrin ring with a hydroxyethyl farnesyl side group. The protein is Protoheme IX farnesyltransferase of Ehrlichia chaffeensis (strain ATCC CRL-10679 / Arkansas).